Reading from the N-terminus, the 225-residue chain is Thymidylate kinase (225 aa).

15-22 (GGEGSGKS) provides a ligand contact to ATP.

This sequence belongs to the thymidylate kinase family.

It catalyses the reaction dTMP + ATP = dTDP + ADP. Its function is as follows. Phosphorylation of dTMP to form dTDP in both de novo and salvage pathways of dTTP synthesis. This Protochlamydia amoebophila (strain UWE25) protein is Thymidylate kinase.